A 395-amino-acid chain; its full sequence is GPI-anchor transamidase (395 aa).

Residues 1–27 (MVGTWFLCRGFTTLAGLLLLPFGSLAA) form the signal peptide. The Lumenal portion of the chain corresponds to 28–368 (SQIEDQAEQF…PKLKDWHPPG (341 aa)). 4 residues coordinate Ca(2+): Asp79, Ile82, Glu118, and Asp120. His164 acts as the Proton donor in catalysis. Catalysis depends on Cys206, which acts as the Nucleophile; acyl-thioester intermediate. A protein is bound by residues Cys206, Ser232, and Ser234. The tract at residues 231-236 (DSLSHQ) is autoinhibitory loop. The cysteines at positions 275 and 280 are disulfide-linked. A helical membrane pass occupies residues 369 to 385 (GFILGLWALIIMVFFKT). The Cytoplasmic portion of the chain corresponds to 386-395 (YGIKHMKFIF).

This sequence belongs to the peptidase C13 family. As to quaternary structure, heteropentamer. Part of the GPI-anchor transamidase complex, consisting of PIGK, PIGT, PIGS, PIGU and GAA1. Interacts with GPAA1. Interacts with PIGT; this interaction, via a disulfide link, stabilizes the expression of GAA1 and PIGK and links them to PIGS. The disulfide bond between PIGK/GPI8 and PIGT is important for normal enzyme activity.

Its subcellular location is the endoplasmic reticulum membrane. Its pathway is glycolipid biosynthesis; glycosylphosphatidylinositol-anchor biosynthesis. Its activity is regulated as follows. In the absence of proproteins substrates, exists in an inactive state with a disrupted catalytic site by an autoinhibitory loop. The binding of proprotein substrates, particularly the CSP region, to GPI-T triggers concerted conformational changes that alleviate the inhibition by the autoinhibitory loop. Meanwhile, proprotein residues near the omega- site induce the formation of a catalytic cleft for catalysis, following which the products are released and GPI-T reverts to the inactive state. In terms of biological role, catalytic subunit of the glycosylphosphatidylinositol-anchor (GPI-anchor) transamidase (GPI-T) complex that catalyzes the formation of the linkage between a proprotein and a GPI-anchor and participates in GPI anchored protein biosynthesis. Recognizes diverse proproteins at a C-terminal signal peptide (CSP) region that lacks consensus sequence and replaces it with a GPI-anchor via a transamidation reaction. Transamidation catalysis reaction follows a two-phase mechanism. In the acyl-enzyme phase, the carbonyl group of the proproteins's omega-site undergoes a nucleophilic attack forming an enzyme-substrate thioester bond. Followed by a general acid catalysis that allows CSP releasing, regenerating the carbonyl, and forming the acyl-enzyme intermediate. In the GPI-anchor attachment phase, the amino group of the GPI-anchor's ethanolamine phosphate, the one on third mannose (EtNP3), mediates a nucleophilic attack on the carbonyl of the acyl-enzyme intermediate, replacing the CSP, allowing GPI-anchor attachment to the omega-residue, therefore forming the product and freeing the enzyme. The chain is GPI-anchor transamidase from Sus scrofa (Pig).